Here is a 1466-residue protein sequence, read N- to C-terminus: ABC transporter G family member 10 (1466 aa).

Positions 23–45 are enriched in low complexity; the sequence is NTPQYENNNNNNNNTSGNESPNI. A disordered region spans residues 23 to 47; the sequence is NTPQYENNNNNNNNTSGNESPNILN. An ABC transporter 1 domain is found at 138–392; sequence VTIFNLFRPS…FLDLGFDCEP (255 aa). Residues 497 to 724 enclose the ABC transmembrane type-2 1 domain; sequence WGDRFALISK…NGSTMSYQDQ (228 aa). A run of 6 helical transmembrane segments spans residues 501-521, 537-557, 586-606, 611-631, 641-661, and 767-787; these read FALISKYISIIVQTFVYASLF, AIYAAILFNAFVSAGELGLTF, IPLTAIQVTIFSVIVYFMYGL, GKFFIFLFTIFGSTLSMVAFF, LYVSQNILNVFILFMFTYGGY, and IITFLWWIFFVIINMIALELF. Positions 838–1082 constitute an ABC transporter 2 domain; sequence FTWNHIHYTV…LTSYFERNGV (245 aa). An ATP-binding site is contributed by 874–881; it reads GSSGAGKT. In terms of domain architecture, ABC transmembrane type-2 2 spans 1177–1399; that stretch reads SYVYGIFTQA…LTCKEYFKPT (223 aa). The next 6 helical transmembrane spans lie at 1178 to 1198, 1214 to 1234, 1253 to 1273, 1290 to 1310, 1319 to 1339, and 1440 to 1460; these read YVYGIFTQAAASGLIIGFTFW, IFEILFLGILYIFIAIPQFLI, FAISIVIVELPFVAVAGTICF, FYFYITFILFLFICVSLGQVV, LAQTILPLLLVMLFLFCGVLV, and YGILWAFFIFNIIMVVSFVYL.

It belongs to the ABC transporter superfamily. ABCG family. PDR (TC 3.A.1.205) subfamily.

It localises to the membrane. This Dictyostelium discoideum (Social amoeba) protein is ABC transporter G family member 10 (abcG10).